The chain runs to 712 residues: DNA topoisomerase 3 (712 aa).

The Toprim domain occupies 2–135; sequence KSLIIAEKPS…TKRLWISSVT (134 aa). Residues E8 and D104 each contribute to the Mg(2+) site. A Topo IA-type catalytic domain is found at 152–581; that stretch reads FNNLYHAALA…EMKAFTNQVV (430 aa). The interaction with DNA stretch occupies residues 186–191; sequence SLGRVQ. Y305 (O-(5'-phospho-DNA)-tyrosine intermediate) is an active-site residue.

This sequence belongs to the type IA topoisomerase family. It depends on Mg(2+) as a cofactor.

The enzyme catalyses ATP-independent breakage of single-stranded DNA, followed by passage and rejoining.. In terms of biological role, releases the supercoiling and torsional tension of DNA, which is introduced during the DNA replication and transcription, by transiently cleaving and rejoining one strand of the DNA duplex. Introduces a single-strand break via transesterification at a target site in duplex DNA. The scissile phosphodiester is attacked by the catalytic tyrosine of the enzyme, resulting in the formation of a DNA-(5'-phosphotyrosyl)-enzyme intermediate and the expulsion of a 3'-OH DNA strand. The free DNA strand then undergoes passage around the unbroken strand, thus removing DNA supercoils. Finally, in the religation step, the DNA 3'-OH attacks the covalent intermediate to expel the active-site tyrosine and restore the DNA phosphodiester backbone. This is DNA topoisomerase 3 from Staphylococcus saprophyticus subsp. saprophyticus (strain ATCC 15305 / DSM 20229 / NCIMB 8711 / NCTC 7292 / S-41).